The sequence spans 234 residues: 1-(5-phosphoribosyl)-5-[(5-phosphoribosylamino)methylideneamino] imidazole-4-carboxamide isomerase (234 aa).

Catalysis depends on Asp9, which acts as the Proton acceptor. Asp131 (proton donor) is an active-site residue.

It belongs to the HisA/HisF family.

It localises to the cytoplasm. The enzyme catalyses 1-(5-phospho-beta-D-ribosyl)-5-[(5-phospho-beta-D-ribosylamino)methylideneamino]imidazole-4-carboxamide = 5-[(5-phospho-1-deoxy-D-ribulos-1-ylimino)methylamino]-1-(5-phospho-beta-D-ribosyl)imidazole-4-carboxamide. The protein operates within amino-acid biosynthesis; L-histidine biosynthesis; L-histidine from 5-phospho-alpha-D-ribose 1-diphosphate: step 4/9. The polypeptide is 1-(5-phosphoribosyl)-5-[(5-phosphoribosylamino)methylideneamino] imidazole-4-carboxamide isomerase (Staphylococcus saprophyticus subsp. saprophyticus (strain ATCC 15305 / DSM 20229 / NCIMB 8711 / NCTC 7292 / S-41)).